Reading from the N-terminus, the 326-residue chain is F-box/LRR-repeat protein 12 (326 aa).

An F-box domain is found at 1-47; it reads MATFADLPDSVLLEIFSYLPVRDRIRISRVCHHWKKLVDDRWLWRHV. LRR repeat units lie at residues 51–78, 86–111, 161–185, 186–211, 212–236, 237–261, and 266–291; these read LYTMRPKVMWHLLRRYMASRLHSLRMGG, APQLSPALMRALGQKCPNLKRLCLHV, VPAFRDEHLQGLTRFRALRSLVLGG, TYRVTETGLDMGLQELNYLQRLEVLG, CTLSADSTLLAISRHLRDVRKIRLT, VRGLSAPGLSVLEGMPALESLCLLG, and PEMPSPQEILASCLTMPKLRVLELQG.

Interacts with SKP1 and CUL1.

It functions in the pathway protein modification; protein ubiquitination. Its function is as follows. Substrate-recognition component of the SCF (SKP1-CUL1-F-box protein)-type E3 ubiquitin ligase complex. Mediates the polyubiquitination and proteasomal degradation of CAMK1 leading to disruption of cyclin D1/CDK4 complex assembly which results in G1 cell cycle arrest in lung epithelia. This is F-box/LRR-repeat protein 12 (FBXL12) from Bos taurus (Bovine).